The sequence spans 336 residues: Glycerol-3-phosphate dehydrogenase [NAD(P)+] (336 aa).

NADPH is bound by residues serine 11, tryptophan 12, arginine 33, arginine 34, and lysine 107. Sn-glycerol 3-phosphate-binding residues include lysine 107 and glycine 137. Alanine 141 serves as a coordination point for NADPH. Residues lysine 192, aspartate 245, serine 255, arginine 256, and asparagine 257 each coordinate sn-glycerol 3-phosphate. Lysine 192 serves as the catalytic Proton acceptor. Arginine 256 is an NADPH binding site. Glutamate 282 contacts NADPH.

It belongs to the NAD-dependent glycerol-3-phosphate dehydrogenase family.

It localises to the cytoplasm. The enzyme catalyses sn-glycerol 3-phosphate + NAD(+) = dihydroxyacetone phosphate + NADH + H(+). It carries out the reaction sn-glycerol 3-phosphate + NADP(+) = dihydroxyacetone phosphate + NADPH + H(+). Its pathway is membrane lipid metabolism; glycerophospholipid metabolism. Functionally, catalyzes the reduction of the glycolytic intermediate dihydroxyacetone phosphate (DHAP) to sn-glycerol 3-phosphate (G3P), the key precursor for phospholipid synthesis. The sequence is that of Glycerol-3-phosphate dehydrogenase [NAD(P)+] from Thermobifida fusca (strain YX).